The primary structure comprises 461 residues: MNIDKNLLEKWDKEYIWHPYTQMKEYRESKNLIIERGEGNYLIDIYGNKYLDAVSSIWCNLFGHSRKEIIEAIKNQADKICHSTLLGCGNVPSILLAKKLVDITPKHLTKVFYSEDGAEAVEIAIKMAYQYYVLRGDKGRTKFISVKEGYHGDTVGAMSVGGSELFHGVFKPLLFKGYHANPPYCYRCKYHNFKDTDERNEKGCEMECLNEMISLIEKHAEEVFCVILEGGIMGSAGMIPYPDGYIEGVAKACKENDVIFILDEVATGFGRTGKMFFCDNEELKKLEKPDILCLGKGLTGGYLPLAATLTTDEIYNQFLGEFGESKQLYHGHTYTGNQLLCSAALATLEIFEKENVIENIQPKIKLFHKELRKLKELEHVGDVRGRGFMVGIELVKDKETKEPYPYGYKAGYRVAEKLLEKGIYMRPIGNVIILVPPLSITEKEIIYLCDALYEAIKEADL.

117 to 118 (GA) contacts pyridoxal 5'-phosphate. Residue Tyr-150 coordinates substrate. Asp-263 is a binding site for pyridoxal 5'-phosphate. Lys-296, Gly-331, and Arg-426 together coordinate substrate. Lys-296 is subject to N6-(pyridoxal phosphate)lysine.

This sequence belongs to the class-III pyridoxal-phosphate-dependent aminotransferase family. BioA subfamily. In terms of assembly, homodimer. Pyridoxal 5'-phosphate is required as a cofactor.

The protein resides in the cytoplasm. The catalysed reaction is (8S)-8-amino-7-oxononanoate + S-adenosyl-L-methionine = S-adenosyl-4-methylsulfanyl-2-oxobutanoate + (7R,8S)-7,8-diammoniononanoate. The protein operates within cofactor biosynthesis; biotin biosynthesis; 7,8-diaminononanoate from 8-amino-7-oxononanoate (SAM route): step 1/1. In terms of biological role, catalyzes the transfer of the alpha-amino group from S-adenosyl-L-methionine (SAM) to 7-keto-8-aminopelargonic acid (KAPA) to form 7,8-diaminopelargonic acid (DAPA). It is the only aminotransferase known to utilize SAM as an amino donor. The protein is Adenosylmethionine-8-amino-7-oxononanoate aminotransferase of Methanocaldococcus jannaschii (strain ATCC 43067 / DSM 2661 / JAL-1 / JCM 10045 / NBRC 100440) (Methanococcus jannaschii).